Consider the following 413-residue polypeptide: MDNVRGSIMLQPLPEIAESIDDAICHELSMWPDDAKDLLLIVEAISRGDLKLVLVACAKAVSENNLLMARWCMGELRGMVSISGEPIQRLGAYMLEGLVARLAASGSSIYKSLQSREPESYEFLSYVYVLHEVCPYFKFGYMSANGAIAEAMKDEERIHIIDFQIGQGSQWIALIQAFAARPGGAPNIRITGVGDGSVLVTVKKRLEKLAKKFDVPFRFNAVSRPSCEVEVENLDVRDGEALGVNFAYMLHHLPDESVSMENHRDRLLRMVKSLSPKVVTLVEQECNTNTSPFLPRFLETLSYYTAMFESIDVMLPRNHKERINIEQHCMARDVVNIIACEGAERIERHELLGKWKSRFSMAGFEPYPLSSIISATIRALLRDYSNGYAIEERDGALYLGWMDRILVSSCAWK.

The GRAS domain maps to 41–413 (IVEAISRGDL…RILVSSCAWK (373 aa)). The leucine repeat I (LRI) stretch occupies residues 48-108 (GDLKLVLVAC…VARLAASGSS (61 aa)). The tract at residues 127 to 192 (VYVLHEVCPY…GGAPNIRITG (66 aa)) is VHIID. A VHIID motif is present at residues 158 to 162 (IHIID). Positions 201 to 233 (TVKKRLEKLAKKFDVPFRFNAVSRPSCEVEVEN) are leucine repeat II (LRII). A PFYRE region spans residues 242–336 (LGVNFAYMLH…QHCMARDVVN (95 aa)). The SAW stretch occupies residues 339 to 413 (ACEGAERIER…RILVSSCAWK (75 aa)).

It belongs to the GRAS family. In terms of assembly, interacts with Meloidogyne incognita 16D10. Expressed in seedlings, roots, cotyledons, leaves and flowers.

It localises to the nucleus. In terms of biological role, probable transcription factor involved in plant development. In Arabidopsis thaliana (Mouse-ear cress), this protein is Scarecrow-like protein 21 (SCL21).